A 211-amino-acid chain; its full sequence is Uracil phosphoribosyltransferase (211 aa).

Residues Arg79, Arg104, and 131–139 (DPMLATGGS) contribute to the 5-phospho-alpha-D-ribose 1-diphosphate site. Uracil contacts are provided by residues Ile196 and 201–203 (GDA). Asp202 serves as a coordination point for 5-phospho-alpha-D-ribose 1-diphosphate.

It belongs to the UPRTase family. Mg(2+) is required as a cofactor.

It carries out the reaction UMP + diphosphate = 5-phospho-alpha-D-ribose 1-diphosphate + uracil. The protein operates within pyrimidine metabolism; UMP biosynthesis via salvage pathway; UMP from uracil: step 1/1. Allosterically activated by GTP. In terms of biological role, catalyzes the conversion of uracil and 5-phospho-alpha-D-ribose 1-diphosphate (PRPP) to UMP and diphosphate. This chain is Uracil phosphoribosyltransferase, found in Lactococcus lactis subsp. lactis (strain IL1403) (Streptococcus lactis).